Here is a 212-residue protein sequence, read N- to C-terminus: Probable nicotinate-nucleotide adenylyltransferase (212 aa).

Belongs to the NadD family.

It carries out the reaction nicotinate beta-D-ribonucleotide + ATP + H(+) = deamido-NAD(+) + diphosphate. It functions in the pathway cofactor biosynthesis; NAD(+) biosynthesis; deamido-NAD(+) from nicotinate D-ribonucleotide: step 1/1. Catalyzes the reversible adenylation of nicotinate mononucleotide (NaMN) to nicotinic acid adenine dinucleotide (NaAD). The protein is Probable nicotinate-nucleotide adenylyltransferase of Chromobacterium violaceum (strain ATCC 12472 / DSM 30191 / JCM 1249 / CCUG 213 / NBRC 12614 / NCIMB 9131 / NCTC 9757 / MK).